A 340-amino-acid polypeptide reads, in one-letter code: Holliday junction branch migration complex subunit RuvB (340 aa).

The large ATPase domain (RuvB-L) stretch occupies residues 1-182; that stretch reads MSDIDPTVRA…FGIPTRLQFY (182 aa). Residues L21, R22, G63, K66, T67, T68, 129 to 131, R172, Y182, and R219 each bind ATP; that span reads EDF. T67 lines the Mg(2+) pocket. The segment at 183–253 is small ATPAse domain (RuvB-S); sequence TEDELFIIVD…LADMALNRLG (71 aa). The tract at residues 256 to 340 is head domain (RuvB-H); it reads HLGLDGADRR…PRAQTDLFEG (85 aa). Positions 292, 311, and 316 each coordinate DNA.

It belongs to the RuvB family. In terms of assembly, homohexamer. Forms an RuvA(8)-RuvB(12)-Holliday junction (HJ) complex. HJ DNA is sandwiched between 2 RuvA tetramers; dsDNA enters through RuvA and exits via RuvB. An RuvB hexamer assembles on each DNA strand where it exits the tetramer. Each RuvB hexamer is contacted by two RuvA subunits (via domain III) on 2 adjacent RuvB subunits; this complex drives branch migration. In the full resolvosome a probable DNA-RuvA(4)-RuvB(12)-RuvC(2) complex forms which resolves the HJ.

It is found in the cytoplasm. It catalyses the reaction ATP + H2O = ADP + phosphate + H(+). Functionally, the RuvA-RuvB-RuvC complex processes Holliday junction (HJ) DNA during genetic recombination and DNA repair, while the RuvA-RuvB complex plays an important role in the rescue of blocked DNA replication forks via replication fork reversal (RFR). RuvA specifically binds to HJ cruciform DNA, conferring on it an open structure. The RuvB hexamer acts as an ATP-dependent pump, pulling dsDNA into and through the RuvAB complex. RuvB forms 2 homohexamers on either side of HJ DNA bound by 1 or 2 RuvA tetramers; 4 subunits per hexamer contact DNA at a time. Coordinated motions by a converter formed by DNA-disengaged RuvB subunits stimulates ATP hydrolysis and nucleotide exchange. Immobilization of the converter enables RuvB to convert the ATP-contained energy into a lever motion, pulling 2 nucleotides of DNA out of the RuvA tetramer per ATP hydrolyzed, thus driving DNA branch migration. The RuvB motors rotate together with the DNA substrate, which together with the progressing nucleotide cycle form the mechanistic basis for DNA recombination by continuous HJ branch migration. Branch migration allows RuvC to scan DNA until it finds its consensus sequence, where it cleaves and resolves cruciform DNA. This Roseobacter denitrificans (strain ATCC 33942 / OCh 114) (Erythrobacter sp. (strain OCh 114)) protein is Holliday junction branch migration complex subunit RuvB.